The sequence spans 304 residues: Acetylglutamate kinase (304 aa).

Substrate-binding positions include 77-78, Arg-99, and Asn-193; that span reads GG.

It belongs to the acetylglutamate kinase family. ArgB subfamily.

It is found in the cytoplasm. The catalysed reaction is N-acetyl-L-glutamate + ATP = N-acetyl-L-glutamyl 5-phosphate + ADP. The protein operates within amino-acid biosynthesis; L-arginine biosynthesis; N(2)-acetyl-L-ornithine from L-glutamate: step 2/4. In terms of biological role, catalyzes the ATP-dependent phosphorylation of N-acetyl-L-glutamate. In Chlorobium limicola (strain DSM 245 / NBRC 103803 / 6330), this protein is Acetylglutamate kinase.